A 129-amino-acid polypeptide reads, in one-letter code: Serum amyloid A-2 protein (129 aa).

The first 18 residues, 1 to 18 (MKLFTGLIFCSLVLGVHS), serve as a signal peptide directing secretion. Q19 carries the pyrrolidone carboxylic acid modification. The span at 90–103 (KHGDSGHGVEDSRA) shows a compositional bias: basic and acidic residues. The segment at 90–129 (KHGDSGHGVEDSRADQAANEWGRSGKDPNHFRPPGLPDKY) is disordered.

It belongs to the SAA family. In terms of assembly, apolipoprotein of the HDL complex.

It localises to the secreted. Its function is as follows. Major acute phase reactant. The chain is Serum amyloid A-2 protein from Sus scrofa (Pig).